Here is a 509-residue protein sequence, read N- to C-terminus: Pituitary homeobox homolog Ptx1 (509 aa).

Low complexity predominate over residues 70–98 (NGAGSAGSAESATTTSTALSSGSTGSSTV). Disordered stretches follow at residues 70–125 (NGAG…SSVS), 148–171 (QDLV…PKHE), and 204–273 (LNNF…HFTS). A compositionally biased stretch (polar residues) spans 227 to 242 (RSVNETTIKTENISSS). Residues 243-258 (GHDEPMTTSGEEPKND) are compositionally biased toward basic and acidic residues. The segment covering 259 to 269 (KKNKRQRRQRT) has biased composition (basic residues). A DNA-binding region (homeobox) is located at residues 262–322 (KRQRRQRTHF…KNRRAKWRKR (61 aa)). The OAR motif lies at 460–473 (SSIATLRLKAKQHA). A Nuclear localization signal motif is present at residues 464 to 470 (TLRLKAK).

The protein belongs to the paired homeobox family. Bicoid subfamily.

Its subcellular location is the nucleus. Functionally, appears to control physiological cell functions rather than pattern formation during embryogenesis. In Drosophila melanogaster (Fruit fly), this protein is Pituitary homeobox homolog Ptx1 (Ptx1).